We begin with the raw amino-acid sequence, 349 residues long: Holliday junction branch migration complex subunit RuvB (349 aa).

Positions 1–183 are large ATPase domain (RuvB-L); that stretch reads MTDPSRLVTP…FGIPIRLNFY (183 aa). ATP is bound by residues leucine 22, arginine 23, glycine 64, lysine 67, threonine 68, threonine 69, 130 to 132, arginine 173, tyrosine 183, and arginine 220; that span reads EDF. Threonine 68 serves as a coordination point for Mg(2+). Positions 184 to 254 are small ATPAse domain (RuvB-S); sequence TIEELESIVT…IADHALGALE (71 aa). A head domain (RuvB-H) region spans residues 257–349; it reads SAGLDAMDRR…GLFGDTGDQE (93 aa). DNA-binding residues include arginine 293, arginine 312, and arginine 317.

This sequence belongs to the RuvB family. Homohexamer. Forms an RuvA(8)-RuvB(12)-Holliday junction (HJ) complex. HJ DNA is sandwiched between 2 RuvA tetramers; dsDNA enters through RuvA and exits via RuvB. An RuvB hexamer assembles on each DNA strand where it exits the tetramer. Each RuvB hexamer is contacted by two RuvA subunits (via domain III) on 2 adjacent RuvB subunits; this complex drives branch migration. In the full resolvosome a probable DNA-RuvA(4)-RuvB(12)-RuvC(2) complex forms which resolves the HJ.

The protein resides in the cytoplasm. The catalysed reaction is ATP + H2O = ADP + phosphate + H(+). The RuvA-RuvB-RuvC complex processes Holliday junction (HJ) DNA during genetic recombination and DNA repair, while the RuvA-RuvB complex plays an important role in the rescue of blocked DNA replication forks via replication fork reversal (RFR). RuvA specifically binds to HJ cruciform DNA, conferring on it an open structure. The RuvB hexamer acts as an ATP-dependent pump, pulling dsDNA into and through the RuvAB complex. RuvB forms 2 homohexamers on either side of HJ DNA bound by 1 or 2 RuvA tetramers; 4 subunits per hexamer contact DNA at a time. Coordinated motions by a converter formed by DNA-disengaged RuvB subunits stimulates ATP hydrolysis and nucleotide exchange. Immobilization of the converter enables RuvB to convert the ATP-contained energy into a lever motion, pulling 2 nucleotides of DNA out of the RuvA tetramer per ATP hydrolyzed, thus driving DNA branch migration. The RuvB motors rotate together with the DNA substrate, which together with the progressing nucleotide cycle form the mechanistic basis for DNA recombination by continuous HJ branch migration. Branch migration allows RuvC to scan DNA until it finds its consensus sequence, where it cleaves and resolves cruciform DNA. In Rhodopseudomonas palustris (strain TIE-1), this protein is Holliday junction branch migration complex subunit RuvB.